The sequence spans 175 residues: MLTSGIILLAGSLLSPNPGLIFWTAITFVIVLLILKKIAWGPIIGALEEREKGIQSSIDRAHSAKEESEAILRKNRELLAKADAESDKIIREGKDYADKLRADITEKAQSEAKKMIATAKDEIEQEKRRALDVLRNEVADLAVKGAEKIIKTTLDADMQKKIVDSMIQDLSTKRN.

A helical membrane pass occupies residues leucine 20–tryptophan 40.

This sequence belongs to the ATPase B chain family. As to quaternary structure, F-type ATPases have 2 components, F(1) - the catalytic core - and F(0) - the membrane proton channel. F(1) has five subunits: alpha(3), beta(3), gamma(1), delta(1), epsilon(1). F(0) has four main subunits: a(1), b(2) and c(10-14). The alpha and beta chains form an alternating ring which encloses part of the gamma chain. F(1) is attached to F(0) by a central stalk formed by the gamma and epsilon chains, while a peripheral stalk is formed by the delta and b chains.

It is found in the cell inner membrane. In terms of biological role, f(1)F(0) ATP synthase produces ATP from ADP in the presence of a proton or sodium gradient. F-type ATPases consist of two structural domains, F(1) containing the extramembraneous catalytic core and F(0) containing the membrane proton channel, linked together by a central stalk and a peripheral stalk. During catalysis, ATP synthesis in the catalytic domain of F(1) is coupled via a rotary mechanism of the central stalk subunits to proton translocation. Component of the F(0) channel, it forms part of the peripheral stalk, linking F(1) to F(0). The protein is ATP synthase subunit b of Pelodictyon phaeoclathratiforme (strain DSM 5477 / BU-1).